Reading from the N-terminus, the 296-residue chain is Sulfotransferase 1C2 (296 aa).

49-54 (KSGTTW) lines the 3'-phosphoadenylyl sulfate pocket. 107-109 (RTH) contributes to the substrate binding site. Residue histidine 109 is the Proton acceptor of the active site. 3'-phosphoadenylyl sulfate-binding positions include arginine 131, serine 139, tyrosine 194, and 228–233 (TSFEKM). Serine 139 bears the Phosphoserine mark. Serine 254 is subject to Phosphoserine. Position 256–260 (256–260 (FMRKG)) interacts with 3'-phosphoadenylyl sulfate.

The protein belongs to the sulfotransferase 1 family. In terms of tissue distribution, highly expressed in kidney and at lower levels in stomach and liver. More specifically found in the epithelia of proximal tubules of the kidney, of the bile duct, of the gastric mucosa, and in hepatocytes.

The protein localises to the cytoplasm. The protein resides in the lysosome. It localises to the mitochondrion. The catalysed reaction is a phenol + 3'-phosphoadenylyl sulfate = an aryl sulfate + adenosine 3',5'-bisphosphate + H(+). It catalyses the reaction cholesterol + 3'-phosphoadenylyl sulfate = cholesterol sulfate + adenosine 3',5'-bisphosphate + H(+). Functionally, sulfotransferase that utilizes 3'-phospho-5'-adenylyl sulfate (PAPS) to catalyze the sulfate conjugation of phenolic compounds. Does not transfer sulfate to steroids, dopamine, acetaminophen, or alpha-naphthol. Except in mitochondria, where it can add sulfate to cholesterol producing cholesterol sulfate, which alters mitochondrial membrane organization, and impacts protein complex mobility increasing state-III respiration, thereby modulating mitochondrial respiration. Catalyzes the sulfation of the carcinogenic N-hydroxy-2-acetylaminofluorene leading to highly reactive intermediates capable of forming DNA adducts, potentially resulting in mutagenesis. The polypeptide is Sulfotransferase 1C2 (Sult1c2) (Rattus norvegicus (Rat)).